A 190-amino-acid chain; its full sequence is Elongation factor P 2 (190 aa).

The protein belongs to the elongation factor P family.

Its subcellular location is the cytoplasm. The protein operates within protein biosynthesis; polypeptide chain elongation. Its function is as follows. Involved in peptide bond synthesis. Stimulates efficient translation and peptide-bond synthesis on native or reconstituted 70S ribosomes in vitro. Probably functions indirectly by altering the affinity of the ribosome for aminoacyl-tRNA, thus increasing their reactivity as acceptors for peptidyl transferase. The chain is Elongation factor P 2 (efp2) from Chlamydia pneumoniae (Chlamydophila pneumoniae).